A 336-amino-acid polypeptide reads, in one-letter code: Aspartate--ammonia ligase (336 aa).

The protein belongs to the class-II aminoacyl-tRNA synthetase family. AsnA subfamily.

It is found in the cytoplasm. It catalyses the reaction L-aspartate + NH4(+) + ATP = L-asparagine + AMP + diphosphate + H(+). It participates in amino-acid biosynthesis; L-asparagine biosynthesis; L-asparagine from L-aspartate (ammonia route): step 1/1. The protein is Aspartate--ammonia ligase of Lactobacillus acidophilus (strain ATCC 700396 / NCK56 / N2 / NCFM).